We begin with the raw amino-acid sequence, 1237 residues long: Mediator of RNA polymerase II transcription subunit 5 (1237 aa).

2 disordered regions span residues 1109–1131 (DDEPCSPQPPHAAANATSHTSNA) and 1202–1226 (HGAQQCRERTQNDAPVNGGKDADSG). The span at 1119 to 1131 (HAAANATSHTSNA) shows a compositional bias: low complexity.

The protein belongs to the Mediator complex subunit 5 family. In terms of assembly, component of the Mediator complex.

The protein localises to the nucleus. Functionally, component of the Mediator complex, a coactivator involved in the regulated transcription of nearly all RNA polymerase II-dependent genes. Mediator functions as a bridge to convey information from gene-specific regulatory proteins to the basal RNA polymerase II transcription machinery. Mediator is recruited to promoters by direct interactions with regulatory proteins and serves as a scaffold for the assembly of a functional preinitiation complex with RNA polymerase II and the general transcription factors. The chain is Mediator of RNA polymerase II transcription subunit 5 (NUT1) from Mycosarcoma maydis (Corn smut fungus).